We begin with the raw amino-acid sequence, 640 residues long: Cytochrome P450 monooxygenase cyp1 (640 aa).

N-linked (GlcNAc...) asparagine glycosylation is present at Asn71. Residues 120–139 (LLVFLVGLFLGTIYLLYRYW) traverse the membrane as a helical segment. Asn350 is a glycosylation site (N-linked (GlcNAc...) asparagine). Cys572 serves as a coordination point for heme.

Belongs to the cytochrome P450 family. Requires heme as cofactor.

Its subcellular location is the membrane. Its pathway is secondary metabolite biosynthesis. Functionally, cytochrome P450 monooxygenase; part of the gene cluster that mediates the biosynthesis of the glycolipid biosurfactant ustilagic acid (UA). UA is a secreted cellobiose glycolipid that is toxic for many microorganisms and confers biocontrol activity to U.maydis. UA consists of 15,16-dihydroxypalmitic or 2,15,16-trihydroxypalmitic acid, which is O-glycosidically linked to cellobiose at its terminal hydroxyl group. In addition, the cellobiose moiety is acetylated and acylated with a short-chain hydroxy fatty acid. UA biosynthesis starts with omega-hydroxylation of palmitic acid catalyzed by the cytochrome P450 monooxygenase cyp1. Terminal hydroxylation of palmitic acid precedes subterminal hydroxylation catalyzed by the cytochrome P450 monooxygenase cyp2. Sequential glucosylation of the hydroxy fatty acid is probably catalyzed by the glycosyltransferase ugt1. The cellobiose lipid is further decorated by acetylation of the proximal glucose residue and by acylation with a short-chain beta-hydroxy fatty acid at the distal glucose residue. The acyltransferase uat1 may be a good candidate for catalyzing either acetylation or acylation of the cellobiose lipid. The fatty acid synthase fas2 may be involved in synthesis of the carbon backbone of the short-chain beta-hydroxy fatty acid esterified to the cellobiose disaccharide. The secreted UA consists of a mixture of both alpha-hydroxylated and non-hydroxylated glycolipids; therefore, alpha-hydroxylation of the long-chain fatty, catalyzed by the fatty acid hydroxylase ahd1, occurs late in UA biosynthesis and may be the last step before secretion. In Mycosarcoma maydis (Corn smut fungus), this protein is Cytochrome P450 monooxygenase cyp1.